Here is a 308-residue protein sequence, read N- to C-terminus: 4-hydroxyproline 2-epimerase (308 aa).

Residue C88 is the Proton acceptor of the active site. Substrate contacts are provided by residues 89-90, H208, and D232; that span reads GH. C236 functions as the Proton donor in the catalytic mechanism. Position 237 to 238 (237 to 238) interacts with substrate; it reads GT.

This sequence belongs to the proline racemase family.

The catalysed reaction is trans-4-hydroxy-L-proline = cis-4-hydroxy-D-proline. Functionally, catalyzes the reversible epimerization of cis-4-hydroxy-D-proline (c4DHyp) to trans-4-hydroxy-L-proline (t4LHyp). May be involved in a degradation pathway that allows P.putida strain KT2440 to grow on either epimer of 4-hydroxyproline, c4DHyp and t4LHyp, as the sole carbon and nitrogen source. Does not exhibit measureable racemase activity in vitro with any of the 19 natural chiral amino acid enantiomers. The polypeptide is 4-hydroxyproline 2-epimerase (Pseudomonas putida (strain ATCC 47054 / DSM 6125 / CFBP 8728 / NCIMB 11950 / KT2440)).